We begin with the raw amino-acid sequence, 309 residues long: Homoserine kinase (309 aa).

Residue Pro-91 to Cys-101 participates in ATP binding.

Belongs to the GHMP kinase family. Homoserine kinase subfamily.

It is found in the cytoplasm. It carries out the reaction L-homoserine + ATP = O-phospho-L-homoserine + ADP + H(+). It functions in the pathway amino-acid biosynthesis; L-threonine biosynthesis; L-threonine from L-aspartate: step 4/5. Its function is as follows. Catalyzes the ATP-dependent phosphorylation of L-homoserine to L-homoserine phosphate. In Citrobacter koseri (strain ATCC BAA-895 / CDC 4225-83 / SGSC4696), this protein is Homoserine kinase.